The primary structure comprises 308 residues: MKNSLYQRHIISISDLNREELEMVVKVAGDLKRTPRHELLKNKVVASCFFEASTRTRLSFETAVQRLGGTVIGFSDGGNTSLAKKGETLADSVQIITSYVDAYVMRHPQEGAARLASMFSNGKPVINGGDGSNQHPTQTLLDLFSIYETQGRLDGLKVAFVGDLKYGRTVHSLAQALSLFGCRFYFIAPEALAMPEYICEELDDKGIEYSLHTSIEEVVGELDILYMTRVQKERFDETEFKHMKSKFVLNVDTLKGAQDNLRILHPLPRVDEIAIEVDHTPYAYYFQQAENGVYAREALLALVLNETI.

R55 and T56 together coordinate carbamoyl phosphate. Residue K85 participates in L-aspartate binding. Carbamoyl phosphate-binding residues include R106, H135, and Q138. L-aspartate is bound by residues R168 and R229. Carbamoyl phosphate is bound by residues L267 and P268.

This sequence belongs to the aspartate/ornithine carbamoyltransferase superfamily. ATCase family. As to quaternary structure, heterododecamer (2C3:3R2) of six catalytic PyrB chains organized as two trimers (C3), and six regulatory PyrI chains organized as three dimers (R2).

It catalyses the reaction carbamoyl phosphate + L-aspartate = N-carbamoyl-L-aspartate + phosphate + H(+). Its pathway is pyrimidine metabolism; UMP biosynthesis via de novo pathway; (S)-dihydroorotate from bicarbonate: step 2/3. Functionally, catalyzes the condensation of carbamoyl phosphate and aspartate to form carbamoyl aspartate and inorganic phosphate, the committed step in the de novo pyrimidine nucleotide biosynthesis pathway. The sequence is that of Aspartate carbamoyltransferase catalytic subunit from Laribacter hongkongensis (strain HLHK9).